Consider the following 197-residue polypeptide: Large ribosomal subunit protein uL22 (197 aa).

The disordered stretch occupies residues Glu-118–Asp-197. Low complexity predominate over residues Ala-149 to Ala-165. Basic residues predominate over residues Thr-172–Pro-183. Residues Ala-184 to Asp-197 are compositionally biased toward low complexity.

It belongs to the universal ribosomal protein uL22 family. Part of the 50S ribosomal subunit.

Its function is as follows. This protein binds specifically to 23S rRNA; its binding is stimulated by other ribosomal proteins, e.g. L4, L17, and L20. It is important during the early stages of 50S assembly. It makes multiple contacts with different domains of the 23S rRNA in the assembled 50S subunit and ribosome. The globular domain of the protein is located near the polypeptide exit tunnel on the outside of the subunit, while an extended beta-hairpin is found that lines the wall of the exit tunnel in the center of the 70S ribosome. The chain is Large ribosomal subunit protein uL22 from Mycobacterium bovis (strain ATCC BAA-935 / AF2122/97).